The primary structure comprises 492 residues: Probable protein phosphatase 2C 33 (492 aa).

The segment at 1-46 is disordered; the sequence is MGSCLSAESRSPRPGSPCSPAFSVRKRKNSKKRPGSRNSSFDYRRE. Residues 24–35 are compositionally biased toward basic residues; sequence VRKRKNSKKRPG. In terms of domain architecture, PPM-type phosphatase spans 64 to 393; the sequence is VACIYTQQGK…DDCAAVCLYL (330 aa). Positions 100, 101, 338, and 384 each coordinate Mn(2+). Residues 406-468 form a disordered region; sequence SISKLEDGEE…ADNLDSEPGT (63 aa). The span at 412-427 shows a compositional bias: acidic residues; it reads DGEEEELKATTEDDDA. Positions 441 to 460 are enriched in basic and acidic residues; it reads SGKEIALDESETEKLIKEAD.

It belongs to the PP2C family. Mg(2+) is required as a cofactor. It depends on Mn(2+) as a cofactor.

It carries out the reaction O-phospho-L-seryl-[protein] + H2O = L-seryl-[protein] + phosphate. The enzyme catalyses O-phospho-L-threonyl-[protein] + H2O = L-threonyl-[protein] + phosphate. The polypeptide is Probable protein phosphatase 2C 33 (PPC6-1) (Arabidopsis thaliana (Mouse-ear cress)).